The following is a 436-amino-acid chain: Glutamyl-tRNA reductase (436 aa).

Substrate-binding positions include 49–52 (TCNR), Ser-109, 114–116 (EGQ), and Gln-120. The Nucleophile role is filled by Cys-50. 198 to 203 (GAGRMS) serves as a coordination point for NADP(+).

The protein belongs to the glutamyl-tRNA reductase family. As to quaternary structure, homodimer.

It carries out the reaction (S)-4-amino-5-oxopentanoate + tRNA(Glu) + NADP(+) = L-glutamyl-tRNA(Glu) + NADPH + H(+). Its pathway is porphyrin-containing compound metabolism; protoporphyrin-IX biosynthesis; 5-aminolevulinate from L-glutamyl-tRNA(Glu): step 1/2. The protein operates within porphyrin-containing compound metabolism; chlorophyll biosynthesis. Catalyzes the NADPH-dependent reduction of glutamyl-tRNA(Glu) to glutamate 1-semialdehyde (GSA). The protein is Glutamyl-tRNA reductase of Prochlorococcus marinus (strain MIT 9303).